Consider the following 217-residue polypeptide: Histone H1C (217 aa).

2 stretches are compositionally biased toward low complexity: residues 1–11 (MAETASTETTP) and 28–45 (KKAA…PSAS). Disordered stretches follow at residues 1 to 45 (MAET…PSAS) and 123 to 217 (VAKK…AAKK). The region spanning 40 to 113 (SGPSASELIV…GASGSFKLNK (74 aa)) is the H15 domain. 2 stretches are compositionally biased toward basic residues: residues 123-151 (VAKK…KPKK) and 159-217 (SPKK…AAKK).

This sequence belongs to the histone H1/H5 family.

Its subcellular location is the nucleus. The protein localises to the chromosome. Histones H1 are necessary for the condensation of nucleosome chains into higher-order structures. The chain is Histone H1C from Xenopus laevis (African clawed frog).